A 452-amino-acid polypeptide reads, in one-letter code: 23S rRNA (uracil(1939)-C(5))-methyltransferase RlmD (452 aa).

The region spanning 1 to 57 is the TRAM domain; sequence METEVNVAEISALDYEGRGVTKVGGKTVFIKGALPSERVGFRIVRQKKQFDEAEAVA. 4 residues coordinate [4Fe-4S] cluster: Cys-70, Cys-76, Cys-79, and Cys-157. S-adenosyl-L-methionine contacts are provided by Gln-269, Phe-298, Asn-303, Glu-319, Asn-347, and Asp-368. Cys-395 (nucleophile) is an active-site residue.

The protein belongs to the class I-like SAM-binding methyltransferase superfamily. RNA M5U methyltransferase family. RlmD subfamily.

The enzyme catalyses uridine(1939) in 23S rRNA + S-adenosyl-L-methionine = 5-methyluridine(1939) in 23S rRNA + S-adenosyl-L-homocysteine + H(+). Catalyzes the formation of 5-methyl-uridine at position 1939 (m5U1939) in 23S rRNA. In Neisseria lactamica (strain 020-06), this protein is 23S rRNA (uracil(1939)-C(5))-methyltransferase RlmD.